The sequence spans 368 residues: Mitogen-activated protein kinase 7 (368 aa).

The region spanning 32 to 319 (YVPIKPIGRG…VTDALLHPYM (288 aa)) is the Protein kinase domain. ATP is bound by residues 38–46 (IGRGAYGVV) and lysine 61. Aspartate 158 (proton acceptor) is an active-site residue. Threonine 191 is subject to Phosphothreonine. The TXY signature appears at 191-193 (TEY). At tyrosine 193 the chain carries Phosphotyrosine. Threonine 196 bears the Phosphothreonine mark.

Belongs to the protein kinase superfamily. CMGC Ser/Thr protein kinase family. MAP kinase subfamily. As to quaternary structure, interacts with MKK3. Requires Mg(2+) as cofactor. In terms of processing, dually phosphorylated on Thr-191 and Tyr-193, which activates the enzyme.

The catalysed reaction is L-seryl-[protein] + ATP = O-phospho-L-seryl-[protein] + ADP + H(+). It carries out the reaction L-threonyl-[protein] + ATP = O-phospho-L-threonyl-[protein] + ADP + H(+). With respect to regulation, activated by threonine and tyrosine phosphorylation. Activated in response to hydrogen peroxide. Activation is triggered by MAPKKK17 and MAPKKK18 in a MKK3-dependent manner. Functionally, MKK3-MPK7 module acts as a positive regulator of PR1 gene expression. This chain is Mitogen-activated protein kinase 7 (MPK7), found in Arabidopsis thaliana (Mouse-ear cress).